The sequence spans 333 residues: Serine/threonine-protein phosphatase 4 catalytic subunit 1 (333 aa).

Residues 1–29 (MALAVADTQNETFARSESPTSGPSDQLST) form a disordered region. A compositionally biased stretch (polar residues) spans 7-27 (DTQNETFARSESPTSGPSDQL). Asp-79, His-81, Asp-107, and Asn-139 together coordinate Mn(2+). The Proton donor role is filled by His-140. The Mn(2+) site is built by His-189 and His-264. Position 333 is a leucine methyl ester (Leu-333).

The protein belongs to the PPP phosphatase family. PP-4 (PP-X) subfamily. In terms of assembly, serine/threonine-protein phosphatase 4 (PP4) occurs in different assemblies of the catalytic and one or more regulatory subunits. The regulatory subunits are likely to be ppfr-1, ppfr-2, ppfr-4 and smk-1. Interacts with mei-1. It depends on Mn(2+) as a cofactor. In terms of processing, methylation at the C-terminal Leu-333 is critical for interactions with regulatory subunits.

The protein resides in the cytoplasm. It is found in the cytoskeleton. Its subcellular location is the microtubule organizing center. The protein localises to the centrosome. It catalyses the reaction O-phospho-L-seryl-[protein] + H2O = L-seryl-[protein] + phosphate. It carries out the reaction O-phospho-L-threonyl-[protein] + H2O = L-threonyl-[protein] + phosphate. In terms of biological role, protein phosphatase which plays an essential role in meiosis and in early embryonic mitosis. During spermatocyte meiosis and the first embryonic mitosis, regulates centrosome maturation, and thus spindle formation, by recruiting some of the components of the pericentriolar material (PCM). During oocyte meiosis I, regulates meiotic chromosome dynamics including synapsis-independent chromosome pairing, restriction of synapsis to homologous chromosomes, programmed DNA double-strand break initiation and crossover formation resulting in chiasma formation. During oocyte meiosis II and probably together with regulatory subunit ppfr-1, may regulate microtubule severing by dephosphorylating and activating mei-1, a component of the katanin microtubule severing complex. The sequence is that of Serine/threonine-protein phosphatase 4 catalytic subunit 1 (pph-4.1) from Caenorhabditis briggsae.